A 109-amino-acid chain; its full sequence is Cell division protein ZapA (109 aa).

Residues 71-99 are a coiled coil; that stretch reads KTRDYASNMEQRIRMLQQTIEQALLEQGR.

Belongs to the ZapA family. Type 1 subfamily. As to quaternary structure, homodimer. Interacts with FtsZ.

Its subcellular location is the cytoplasm. Its function is as follows. Activator of cell division through the inhibition of FtsZ GTPase activity, therefore promoting FtsZ assembly into bundles of protofilaments necessary for the formation of the division Z ring. It is recruited early at mid-cell but it is not essential for cell division. The sequence is that of Cell division protein ZapA from Serratia proteamaculans (strain 568).